We begin with the raw amino-acid sequence, 115 residues long: Protein V2 (115 aa).

This sequence belongs to the geminiviridae protein AV2/V2 family. As to quaternary structure, interacts with host SGS3.

Its subcellular location is the host cytoplasm. It is found in the host perinuclear region. Its function is as follows. Through its interaction with host SGS3, acts as a suppressor of RNA-mediated gene silencing, also known as post-transcriptional gene silencing (PTGS), a mechanism of plant viral defense that limits the accumulation of viral RNAs. The sequence is that of Protein V2 from Tomato yellow leaf curl China virus (TYLCCNV).